A 538-amino-acid polypeptide reads, in one-letter code: Cytochrome P450 52-M1 (538 aa).

A helical transmembrane segment spans residues 18–38; the sequence is GLLPLLFVAFLVLHEPIWLLW. Residue cysteine 484 participates in heme binding.

The protein belongs to the cytochrome P450 family. Heme is required as a cofactor.

It localises to the membrane. The catalysed reaction is an omega-methyl-long-chain fatty acid + reduced [NADPH--hemoprotein reductase] + O2 = an omega-hydroxy-long-chain fatty acid + oxidized [NADPH--hemoprotein reductase] + H2O + H(+). It carries out the reaction an (omega-1)-ethyl fatty acid + reduced [NADPH--hemoprotein reductase] + O2 = an (omega-1)-hydroxy-long-chain fatty acid + oxidized [NADPH--hemoprotein reductase] + H2O + H(+). The enzyme catalyses (9Z)-octadecenoate + reduced [NADPH--hemoprotein reductase] + O2 = 18-hydroxy-(9Z)-octadecenoate + oxidized [NADPH--hemoprotein reductase] + H2O + H(+). It catalyses the reaction (9Z)-octadecenoate + reduced [NADPH--hemoprotein reductase] + O2 = 17-hydroxy-(9Z)-octadecenoate + oxidized [NADPH--hemoprotein reductase] + H2O + H(+). The catalysed reaction is (9Z,12Z)-octadecadienoate + reduced [NADPH--hemoprotein reductase] + O2 = 18-hydroxy-(9Z,12Z)-octadecadienoate + oxidized [NADPH--hemoprotein reductase] + H2O + H(+). It carries out the reaction (9Z,12Z)-octadecadienoate + reduced [NADPH--hemoprotein reductase] + O2 = 17-hydroxy-(9Z,12Z)-octadecadienoate + oxidized [NADPH--hemoprotein reductase] + H2O + H(+). The enzyme catalyses hexadecanoate + reduced [NADPH--hemoprotein reductase] + O2 = 16-hydroxyhexadecanoate + oxidized [NADPH--hemoprotein reductase] + H2O + H(+). It catalyses the reaction (9Z)-hexadecenoate + reduced [NADPH--hemoprotein reductase] + O2 = (9Z)-16-hydroxyhexadec-9-enoate + oxidized [NADPH--hemoprotein reductase] + H2O + H(+). The catalysed reaction is octadecanoate + reduced [NADPH--hemoprotein reductase] + O2 = 18-hydroxyoctadecanoate + oxidized [NADPH--hemoprotein reductase] + H2O + H(+). Functionally, catalyzes the first step of sophorolipid biosynthesis. Catalyzes the terminal (at the omega-position) or subterminal (at the omega(-1)-position) hydroxylation of a fatty acid. This converts the fatty acid to a substrate for the subsequent glycosyltransferase reactions. Oleic acid is the preferred substrate, but it acts on various other C-16, C-18 and C-20 saturated and unsaturated fatty acids, namely palmitic, palmitoleic, stearic, linoleic, cis-9,10-epoxystearic, trans-9,10-epoxystearic and arachidonic acid. The polypeptide is Cytochrome P450 52-M1 (Starmerella bombicola (Yeast)).